The sequence spans 449 residues: Glutamate--tRNA ligase 2 (449 aa).

Residues 11–21 carry the 'HIGH' region motif; that stretch reads PSPTGFLHIGN. Residues 242–246 carry the 'KMSKS' region motif; sequence GLSKR. Lys-245 serves as a coordination point for ATP.

The protein belongs to the class-I aminoacyl-tRNA synthetase family. Glutamate--tRNA ligase type 1 subfamily. As to quaternary structure, monomer.

It localises to the cytoplasm. It catalyses the reaction tRNA(Glu) + L-glutamate + ATP = L-glutamyl-tRNA(Glu) + AMP + diphosphate. In terms of biological role, catalyzes the attachment of glutamate to tRNA(Glu) in a two-step reaction: glutamate is first activated by ATP to form Glu-AMP and then transferred to the acceptor end of tRNA(Glu). The polypeptide is Glutamate--tRNA ligase 2 (Methylorubrum populi (strain ATCC BAA-705 / NCIMB 13946 / BJ001) (Methylobacterium populi)).